Consider the following 464-residue polypeptide: Argininosuccinate lyase (464 aa).

This sequence belongs to the lyase 1 family. Argininosuccinate lyase subfamily.

It localises to the cytoplasm. The catalysed reaction is 2-(N(omega)-L-arginino)succinate = fumarate + L-arginine. It functions in the pathway amino-acid biosynthesis; L-arginine biosynthesis; L-arginine from L-ornithine and carbamoyl phosphate: step 3/3. The protein is Argininosuccinate lyase of Ectopseudomonas mendocina (strain ymp) (Pseudomonas mendocina).